A 247-amino-acid polypeptide reads, in one-letter code: Tyrosine recombinase XerD-like (247 aa).

In terms of domain architecture, Core-binding (CB) spans 1 to 72; it reads MIKHIEAFLA…TVNQFLHYLY (72 aa). One can recognise a Tyr recombinase domain in the interval 91-247; the sequence is STKVPFTYQL…PITLEKYYRL (157 aa). Residue Arg-212 is part of the active site. Tyr-244 functions as the O-(3'-phospho-DNA)-tyrosine intermediate in the catalytic mechanism.

The protein belongs to the 'phage' integrase family. XerD-like subfamily.

It localises to the cytoplasm. Its function is as follows. Putative tyrosine recombinase. Not involved in the cutting and rejoining of the recombining DNA molecules on dif(SL) site. The sequence is that of Tyrosine recombinase XerD-like from Streptococcus uberis (strain ATCC BAA-854 / 0140J).